Reading from the N-terminus, the 212-residue chain is Protein YIPF5 homolog (212 aa).

Residues 1 to 79 lie on the Cytoplasmic side of the membrane; the sequence is MNNNNSFNFI…KKIDSHIMDD (79 aa). Residues 80-100 traverse the membrane as a helical segment; the sequence is TDLGGPILFGLLLGFSLLMSG. A topological domain (lumenal) is located at residue K101. Residues 102 to 122 form a helical membrane-spanning segment; sequence IQFGYIYGLGLIGCVSMYIVL. At 123-128 the chain is on the cytoplasmic side; sequence NLMSEK. The chain crosses the membrane as a helical span at residues 129 to 149; the sequence is GIDIYRVISVLGYCLLPMIFL. Residues 150–163 lie on the Lumenal side of the membrane; the sequence is SFTSLIININGMVG. A helical membrane pass occupies residues 164-186; sequence YILIGFAIVWSTYSASKMFVKVL. Over 187–191 the chain is Cytoplasmic; that stretch reads SMIDQ. The chain crosses the membrane as a helical span at residues 192–212; sequence RILVAYPVGLLYTGFALITAF.

Belongs to the YIP1 family.

Its subcellular location is the endoplasmic reticulum membrane. It localises to the golgi apparatus. The protein localises to the cis-Golgi network membrane. Its function is as follows. Plays a role in transport between endoplasmic reticulum and Golgi. This Dictyostelium discoideum (Social amoeba) protein is Protein YIPF5 homolog (yipf5).